The primary structure comprises 227 residues: Cytochrome c oxidase subunit 2 (227 aa).

At 1-14 (MAYPFQLGFQDATS) the chain is on the mitochondrial intermembrane side. Residues 15–45 (PIMEELLHFHDHALMIVFLISSLVLYLISVM) form a helical membrane-spanning segment. The Mitochondrial matrix portion of the chain corresponds to 46–59 (LTTSLTHTSTMDAQ). The helical transmembrane segment at 60 to 87 (EVETIWTILPAMILIMIALPSLRILYMM) threads the bilayer. Residues 88 to 227 (DEINNPYLTV…YFEKWSSSML (140 aa)) are Mitochondrial intermembrane-facing. Residues His161, Cys196, Glu198, Cys200, His204, and Met207 each contribute to the Cu cation site. Position 198 (Glu198) interacts with Mg(2+). A Phosphotyrosine modification is found at Tyr218.

This sequence belongs to the cytochrome c oxidase subunit 2 family. As to quaternary structure, component of the cytochrome c oxidase (complex IV, CIV), a multisubunit enzyme composed of 14 subunits. The complex is composed of a catalytic core of 3 subunits MT-CO1, MT-CO2 and MT-CO3, encoded in the mitochondrial DNA, and 11 supernumerary subunits COX4I, COX5A, COX5B, COX6A, COX6B, COX6C, COX7A, COX7B, COX7C, COX8 and NDUFA4, which are encoded in the nuclear genome. The complex exists as a monomer or a dimer and forms supercomplexes (SCs) in the inner mitochondrial membrane with NADH-ubiquinone oxidoreductase (complex I, CI) and ubiquinol-cytochrome c oxidoreductase (cytochrome b-c1 complex, complex III, CIII), resulting in different assemblies (supercomplex SCI(1)III(2)IV(1) and megacomplex MCI(2)III(2)IV(2)). Found in a complex with TMEM177, COA6, COX18, COX20, SCO1 and SCO2. Interacts with TMEM177 in a COX20-dependent manner. Interacts with COX20. Interacts with COX16. Cu cation is required as a cofactor.

The protein localises to the mitochondrion inner membrane. It catalyses the reaction 4 Fe(II)-[cytochrome c] + O2 + 8 H(+)(in) = 4 Fe(III)-[cytochrome c] + 2 H2O + 4 H(+)(out). Functionally, component of the cytochrome c oxidase, the last enzyme in the mitochondrial electron transport chain which drives oxidative phosphorylation. The respiratory chain contains 3 multisubunit complexes succinate dehydrogenase (complex II, CII), ubiquinol-cytochrome c oxidoreductase (cytochrome b-c1 complex, complex III, CIII) and cytochrome c oxidase (complex IV, CIV), that cooperate to transfer electrons derived from NADH and succinate to molecular oxygen, creating an electrochemical gradient over the inner membrane that drives transmembrane transport and the ATP synthase. Cytochrome c oxidase is the component of the respiratory chain that catalyzes the reduction of oxygen to water. Electrons originating from reduced cytochrome c in the intermembrane space (IMS) are transferred via the dinuclear copper A center (CU(A)) of subunit 2 and heme A of subunit 1 to the active site in subunit 1, a binuclear center (BNC) formed by heme A3 and copper B (CU(B)). The BNC reduces molecular oxygen to 2 water molecules using 4 electrons from cytochrome c in the IMS and 4 protons from the mitochondrial matrix. The sequence is that of Cytochrome c oxidase subunit 2 (MT-CO2) from Rousettus leschenaultii (Leschenault's rousette).